The sequence spans 930 residues: Protein translocase subunit SecA (930 aa).

ATP-binding positions include Gln-87, 105–109 (GEGKT), and Asp-516. Cys-914, Cys-916, Cys-925, and His-926 together coordinate Zn(2+).

It belongs to the SecA family. In terms of assembly, monomer and homodimer. Part of the essential Sec protein translocation apparatus which comprises SecA, SecYEG and auxiliary proteins SecDF-YajC and YidC. Zn(2+) serves as cofactor.

It is found in the cell inner membrane. It localises to the cytoplasm. It carries out the reaction ATP + H2O + cellular proteinSide 1 = ADP + phosphate + cellular proteinSide 2.. In terms of biological role, part of the Sec protein translocase complex. Interacts with the SecYEG preprotein conducting channel. Has a central role in coupling the hydrolysis of ATP to the transfer of proteins into and across the cell membrane, serving both as a receptor for the preprotein-SecB complex and as an ATP-driven molecular motor driving the stepwise translocation of polypeptide chains across the membrane. The chain is Protein translocase subunit SecA from Variovorax paradoxus (strain S110).